Consider the following 428-residue polypeptide: 3-phosphoshikimate 1-carboxyvinyltransferase (428 aa).

Positions 20, 21, and 25 each coordinate 3-phosphoshikimate. K20 provides a ligand contact to phosphoenolpyruvate. Phosphoenolpyruvate is bound by residues G93 and R122. Residues S167, Q169, D317, and K344 each contribute to the 3-phosphoshikimate site. Residue Q169 participates in phosphoenolpyruvate binding. D317 (proton acceptor) is an active-site residue. The phosphoenolpyruvate site is built by R348 and R390.

It belongs to the EPSP synthase family. In terms of assembly, monomer.

It is found in the cytoplasm. It catalyses the reaction 3-phosphoshikimate + phosphoenolpyruvate = 5-O-(1-carboxyvinyl)-3-phosphoshikimate + phosphate. It functions in the pathway metabolic intermediate biosynthesis; chorismate biosynthesis; chorismate from D-erythrose 4-phosphate and phosphoenolpyruvate: step 6/7. Its function is as follows. Catalyzes the transfer of the enolpyruvyl moiety of phosphoenolpyruvate (PEP) to the 5-hydroxyl of shikimate-3-phosphate (S3P) to produce enolpyruvyl shikimate-3-phosphate and inorganic phosphate. The protein is 3-phosphoshikimate 1-carboxyvinyltransferase of Leptospira biflexa serovar Patoc (strain Patoc 1 / ATCC 23582 / Paris).